The sequence spans 187 residues: Phosphatidylethanolamine-binding protein 1 (187 aa).

Ser13 is modified (phosphoserine). At Thr42 the chain carries Phosphothreonine. Residues Ser52, Ser98, and Ser153 each carry the phosphoserine modification. Positions 93 to 134 are interaction with RAF1; it reads KGNDISSGTVLSDYVGSGPPKGTGLHRYVWLVYEQSGPLKCD.

It belongs to the phosphatidylethanolamine-binding protein family. In terms of assembly, has a tendency to form dimers by disulfide cross-linking. Interacts with RAF1 and this interaction is enhanced if RAF1 is phosphorylated on residues 'Ser-338', 'Ser-339', 'Tyr-340' and 'Tyr-341'. Interacts with ALOX15; in response to IL13/interleukin-13, prevents the interaction of PEBP1 with RAF1 to activate the ERK signaling cascade.

The protein localises to the cytoplasm. In terms of biological role, binds ATP, opioids and phosphatidylethanolamine. Has lower affinity for phosphatidylinositol and phosphatidylcholine. Serine protease inhibitor which inhibits thrombin, neuropsin and chymotrypsin but not trypsin, tissue type plasminogen activator and elastase. Involved in the positive regulation of epithelial cell migration. Inhibits the kinase activity of RAF1 by inhibiting its activation and by dissociating the RAF1/MEK complex and acting as a competitive inhibitor of MEK phosphorylation. HCNP may be involved in the function of the presynaptic cholinergic neurons of the central nervous system. HCNP increases the production of choline acetyltransferase but not acetylcholinesterase. Seems to be mediated by a specific receptor. This Canis lupus familiaris (Dog) protein is Phosphatidylethanolamine-binding protein 1 (PEBP1).